The chain runs to 295 residues: Probable phosphoglycerate mutase PMU1 (295 aa).

The Tele-phosphohistidine intermediate role is filled by His-61. Glu-170 serves as the catalytic Proton donor/acceptor.

Belongs to the phosphoglycerate mutase family.

The protein localises to the cytoplasm. The protein resides in the nucleus. Its function is as follows. Probable phosphomutase that may have a function related to the manipulation of phosphate groups on carbohydrates. Reduces trehalose-6-phosphate levels when overexpressed in TPS2-deleted cells. Reduces 5'-Phosphoribosyl-4-carboxamide-5-aminoimidazole (AICAR) levels, a metabolic intermediate at the crossroads between AMP and histidine biosynthesis pathways, when overexpressed in a ADE3-ADE16-ADE17 triple deletant. This is Probable phosphoglycerate mutase PMU1 from Saccharomyces cerevisiae (strain ATCC 204508 / S288c) (Baker's yeast).